The chain runs to 194 residues: AP-3 complex subunit sigma (194 aa).

It belongs to the adaptor complexes small subunit family. As to quaternary structure, adaptor protein complex 3 (AP-3) is a heterotetramer composed of 2 large adaptins (APL5 and APL6), a medium adaptin (APM3) and a small adaptin (APS3).

It is found in the golgi apparatus. Its subcellular location is the cytoplasmic vesicle membrane. Functionally, part of the AP-3 complex, an adaptor-related complex which is not clathrin-associated. The complex is associated with the Golgi region as well as more peripheral structures. It facilitates the budding of vesicles from the Golgi membrane and may be directly involved in trafficking to the vacuole. Required for the transport via the ALP pathway, which directs the transport of the cargo proteins PHO8 and VAM3 to the vacuole. The chain is AP-3 complex subunit sigma (APS3) from Saccharomyces cerevisiae (strain ATCC 204508 / S288c) (Baker's yeast).